A 316-amino-acid polypeptide reads, in one-letter code: Olfactory receptor 10A7 (316 aa).

Residues 1 to 25 are Extracellular-facing; that stretch reads MICENHTRVTEFILLGFTNNPEMQV. Asn5 carries an N-linked (GlcNAc...) asparagine glycan. Residues 26-46 form a helical membrane-spanning segment; it reads SLFIFFLAIYTVTLLGNFLIV. Topologically, residues 47-54 are cytoplasmic; the sequence is TVTSVDLA. A helical membrane pass occupies residues 55–75; that stretch reads LQTPMYFFLQNLSLLEVCFTL. The Extracellular portion of the chain corresponds to 76–99; it reads VMVPKMLVDLVSPRKIISFVGCGT. Residues 100 to 120 form a helical membrane-spanning segment; sequence QMYFFFFFGSSECFLLSMMAY. Over 121-139 the chain is Cytoplasmic; sequence DRFVAICNPLHYSVIMNRS. A helical transmembrane segment spans residues 140–160; sequence LCLWMAIGSWMSGVPVSMLQT. Topologically, residues 161–197 are extracellular; sequence AWMMALPFCGPNAVDHFFCDGPPVLKLVTVDTTMYEM. The helical transmembrane segment at 198–217 threads the bilayer; sequence QALASTLLFIMFPFCLILVS. Over 218 to 237 the chain is Cytoplasmic; the sequence is YTRIIITILRMSSATGRQKA. A helical membrane pass occupies residues 238–258; the sequence is FSTCSSHLIVVSLFYGTASLT. Residues 259–271 lie on the Extracellular side of the membrane; that stretch reads YLRPKSNQSPESK. Residues 272–292 form a helical membrane-spanning segment; sequence KLVSLSYTVITPMLNPIIYGL. Residues 293 to 316 lie on the Cytoplasmic side of the membrane; the sequence is RNNEVKGAVKRTITQKVLQKLDVF.

It belongs to the G-protein coupled receptor 1 family.

The protein resides in the cell membrane. Its function is as follows. Odorant receptor. This Homo sapiens (Human) protein is Olfactory receptor 10A7 (OR10A7).